Consider the following 550-residue polypeptide: Hydroxylamine reductase (550 aa).

Positions 3, 6, 18, and 25 each coordinate [2Fe-2S] cluster. Positions 249, 273, 317, 405, 433, 458, 492, and 494 each coordinate hybrid [4Fe-2O-2S] cluster. A Cysteine persulfide modification is found at C405.

It belongs to the HCP family. Requires [2Fe-2S] cluster as cofactor. It depends on hybrid [4Fe-2O-2S] cluster as a cofactor.

The protein localises to the cytoplasm. It carries out the reaction A + NH4(+) + H2O = hydroxylamine + AH2 + H(+). In terms of biological role, catalyzes the reduction of hydroxylamine to form NH(3) and H(2)O. This is Hydroxylamine reductase from Pectobacterium atrosepticum (strain SCRI 1043 / ATCC BAA-672) (Erwinia carotovora subsp. atroseptica).